A 392-amino-acid chain; its full sequence is Telomere-binding protein subunit beta (392 aa).

Residues 234–392 (QQVESVQVQP…ASKASKRSKK (159 aa)) are disordered. Residues 247-256 (GGAKGKKKAA) show a composition bias toward basic residues. A compositionally biased stretch (low complexity) spans 257–268 (TKSATKKTVAAK). Basic and acidic residues predominate over residues 269-284 (KTAESADVRKSVDKIV). A compositionally biased stretch (polar residues) spans 328–343 (SPSGKKSTKTTDQMTM). The segment covering 374-384 (GKASATSGKAS) has biased composition (low complexity).

In terms of assembly, heterodimer of an alpha and a beta subunit.

It localises to the nucleus. It is found in the chromosome. The protein localises to the telomere. Its function is as follows. May function as protective capping of the single-stranded telomeric overhang. May also participate in telomere length regulation during DNA replication. In Stylonychia mytilus (Ciliate), this protein is Telomere-binding protein subunit beta (STY43).